Reading from the N-terminus, the 617-residue chain is Proline--tRNA ligase (617 aa).

This sequence belongs to the class-II aminoacyl-tRNA synthetase family. ProS type 1 subfamily. Homodimer.

The protein localises to the cytoplasm. It catalyses the reaction tRNA(Pro) + L-proline + ATP = L-prolyl-tRNA(Pro) + AMP + diphosphate. Its function is as follows. Catalyzes the attachment of proline to tRNA(Pro) in a two-step reaction: proline is first activated by ATP to form Pro-AMP and then transferred to the acceptor end of tRNA(Pro). As ProRS can inadvertently accommodate and process non-cognate amino acids such as alanine and cysteine, to avoid such errors it has two additional distinct editing activities against alanine. One activity is designated as 'pretransfer' editing and involves the tRNA(Pro)-independent hydrolysis of activated Ala-AMP. The other activity is designated 'posttransfer' editing and involves deacylation of mischarged Ala-tRNA(Pro). The misacylated Cys-tRNA(Pro) is not edited by ProRS. This chain is Proline--tRNA ligase, found in Streptococcus pneumoniae (strain CGSP14).